The following is a 686-amino-acid chain: Glycine--tRNA ligase beta subunit (686 aa).

The interval 65 to 99 (ALSEEKRGPSVERAKDENGEWSKAAQGFARGQGAT) is disordered. Residues 67–84 (SEEKRGPSVERAKDENGE) are compositionally biased toward basic and acidic residues.

It belongs to the class-II aminoacyl-tRNA synthetase family. In terms of assembly, tetramer of two alpha and two beta subunits.

Its subcellular location is the cytoplasm. The enzyme catalyses tRNA(Gly) + glycine + ATP = glycyl-tRNA(Gly) + AMP + diphosphate. In Leuconostoc citreum (strain KM20), this protein is Glycine--tRNA ligase beta subunit.